The primary structure comprises 208 residues: MACCTGRCTLILLCTLQLVAALERQVFDFLGYQWAPILANFLHIVATILGLFGTLQYRPRYVIAYALWAAVWVTWNVFLICFYLEVGDLNKESELLTFHVSQHQSWWSEHGPGCVRKEAPVAGVAELESHSYVSVIGCNVEYQYIEVMHSALQILLALLGFVYACYVTSVFTEEEDSFDFIGGFDPFPLYHVNEKSNHLLFKQSYLPA.

A run of 4 helical transmembrane segments spans residues 10-30, 35-55, 62-82, and 151-171; these read LILL…FDFL, APIL…FGTL, VIAY…LICF, and ALQI…TSVF.

It belongs to the NKAIN family. In terms of assembly, interacts with atp1b1 C-terminus.

The protein resides in the cell membrane. This chain is Sodium/potassium-transporting ATPase subunit beta-1-interacting protein 4 (nkain4), found in Xenopus tropicalis (Western clawed frog).